The chain runs to 631 residues: Phosphomethylpyrimidine synthase (631 aa).

Substrate-binding positions include N239, M268, Y297, H333, 353–355 (SRG), 394–397 (DGLR), and E433. H437 contacts Zn(2+). Position 460 (Y460) interacts with substrate. H501 is a Zn(2+) binding site. 3 residues coordinate [4Fe-4S] cluster: C581, C584, and C589.

The protein belongs to the ThiC family. As to quaternary structure, homodimer. [4Fe-4S] cluster is required as a cofactor.

It catalyses the reaction 5-amino-1-(5-phospho-beta-D-ribosyl)imidazole + S-adenosyl-L-methionine = 4-amino-2-methyl-5-(phosphooxymethyl)pyrimidine + CO + 5'-deoxyadenosine + formate + L-methionine + 3 H(+). Its pathway is cofactor biosynthesis; thiamine diphosphate biosynthesis. Its function is as follows. Catalyzes the synthesis of the hydroxymethylpyrimidine phosphate (HMP-P) moiety of thiamine from aminoimidazole ribotide (AIR) in a radical S-adenosyl-L-methionine (SAM)-dependent reaction. The chain is Phosphomethylpyrimidine synthase from Shigella flexneri serotype 5b (strain 8401).